The chain runs to 98 residues: Putative protein adenylyltransferase MJ0128 (98 aa).

A GSX(10)DXD motif motif is present at residues 31–45 (GSYARNEQTEKSDID). Residues Asp-43, Asp-45, and Asp-75 each coordinate Mg(2+).

Belongs to the MntA antitoxin family. Probably forms a complex with cognate toxin MJ0127. Mg(2+) serves as cofactor.

The catalysed reaction is L-tyrosyl-[protein] + ATP = O-(5'-adenylyl)-L-tyrosyl-[protein] + diphosphate. It catalyses the reaction O-(5'-adenylyl)-L-tyrosyl-[protein] + ATP = O-[5'-(adenylyl-(5'-&gt;3')-adenylyl)]-L-tyrosyl-[protein] + diphosphate. Functionally, probable antitoxin component of a putative type VII toxin-antitoxin (TA) system. Neutralizes cognate toxic MJ0127 by di-AMPylation. The protein is Putative protein adenylyltransferase MJ0128 of Methanocaldococcus jannaschii (strain ATCC 43067 / DSM 2661 / JAL-1 / JCM 10045 / NBRC 100440) (Methanococcus jannaschii).